A 211-amino-acid polypeptide reads, in one-letter code: Mediator of RNA polymerase II transcription subunit 20 (211 aa).

It belongs to the Mediator complex subunit 20 family. Component of the Mediator complex.

It localises to the nucleus. Functionally, component of the Mediator complex, a coactivator involved in the regulated transcription of nearly all RNA polymerase II-dependent genes. Mediator functions as a bridge to convey information from gene-specific regulatory proteins to the basal RNA polymerase II transcription machinery. Mediator is recruited to promoters by direct interactions with regulatory proteins and serves as a scaffold for the assembly of a functional preinitiation complex with RNA polymerase II and the general transcription factors. This Kluyveromyces lactis (strain ATCC 8585 / CBS 2359 / DSM 70799 / NBRC 1267 / NRRL Y-1140 / WM37) (Yeast) protein is Mediator of RNA polymerase II transcription subunit 20 (SRB2).